The sequence spans 457 residues: Chromosomal replication initiator protein DnaA (457 aa).

Residues 1–90 form a domain I, interacts with DnaA modulators region; the sequence is MDTNNNIEKE…HSVDVRIEVA (90 aa). The segment at 91 to 112 is domain II; that stretch reads PKIQINAQSNINYKAIKTSVKD. The domain III, AAA+ region stretch occupies residues 113 to 323; the sequence is SYTFENFVVG…GAIIKISVNA (211 aa). Residues glycine 153, glycine 155, lysine 156, and threonine 157 each coordinate ATP. The tract at residues 324–457 is domain IV, binds dsDNA; that stretch reads NLMNASIDLN…DKKTAFNSSE (134 aa).

The protein belongs to the DnaA family. Oligomerizes as a right-handed, spiral filament on DNA at oriC. Interacts via domain I with HobA. In a crystal with domains I and II of DnaA HobA forms tetramers with DnaA fragments bound at the dimer interface of the tetramer.

The protein localises to the cytoplasm. It localises to the cell inner membrane. In terms of biological role, plays an essential role in the initiation and regulation of chromosomal replication. ATP-DnaA binds to the origin of replication (oriC) to initiate formation of the DNA replication initiation complex once per cell cycle. Binds the DnaA box (a 9 base pair repeat at the origin) and separates the double-stranded (ds)DNA. Forms a right-handed helical filament on oriC DNA; dsDNA binds to the exterior of the filament while single-stranded (ss)DNA is stabiized in the filament's interior. The ATP-DnaA-oriC complex binds and stabilizes one strand of the AT-rich DNA unwinding element (DUE), permitting loading of DNA polymerase. After initiation quickly degrades to an ADP-DnaA complex that is not apt for DNA replication. Binds acidic phospholipids. Its function is as follows. The DnaA box is 5'-TTATC[CA]A[CA]A-3' in this bacterium cycle. Multiple discrete DnaA-oriC complexes can be seen as DnaA levels increase. Binding of DnaA to oriC is increased by HobA; some chi-type structures can be seen by electron microscopy. Strand separation requires the DnaA boxes and adjacent DnaA-trio motifs but works equally well with ADP or ATP. The sequence is that of Chromosomal replication initiator protein DnaA from Helicobacter pylori (strain ATCC 700392 / 26695) (Campylobacter pylori).